A 544-amino-acid polypeptide reads, in one-letter code: Aspartokinase (544 aa).

An ACT domain is found at 463-535 (LVGKQMVNFI…SAIGDSSAVD (73 aa)).

This sequence belongs to the aspartokinase family.

It catalyses the reaction L-aspartate + ATP = 4-phospho-L-aspartate + ADP. It functions in the pathway amino-acid biosynthesis; L-methionine biosynthesis via de novo pathway; L-homoserine from L-aspartate: step 1/3. The protein operates within amino-acid biosynthesis; L-threonine biosynthesis; L-threonine from L-aspartate: step 1/5. Its function is as follows. Phosphorylates aspartate, the first step in the biosynthesis of amino acids that derive from aspartate (the aspartate family of amino acids), including methioinine and threonine, the latter of which is a precursor to isoleucine. In Candida albicans (strain SC5314 / ATCC MYA-2876) (Yeast), this protein is Aspartokinase.